A 1657-amino-acid polypeptide reads, in one-letter code: Alsin (1657 aa).

3 RCC1 repeats span residues 59-108 (DGEV…AVTD), 109-167 (NGVA…ALSI), and 169-218 (REIW…ALVQ). The segment at 432–480 (TGAQAGSSAIGPEGLKDSREEQVKQESMQGKKSSSLVDIREEETEGGSR) is disordered. Over residues 445–455 (GLKDSREEQVK) the composition is skewed to basic and acidic residues. Residues 456–467 (QESMQGKKSSSL) are compositionally biased toward polar residues. Phosphoserine is present on residues Ser-465, Ser-466, Ser-483, and Ser-492. Residue Thr-510 is modified to Phosphothreonine. RCC1 repeat units follow at residues 525 to 576 (RTEV…ALTA) and 578 to 627 (SQVY…FLVD). Position 533 is an N6-acetyllysine (Lys-533). In terms of domain architecture, DH spans 690-885 (GYIASLHELA…ECLALHLGRK (196 aa)). In terms of domain architecture, PH spans 901–1007 (GKMTDSLRKP…RAISQAVDQA (107 aa)). 8 MORN repeats span residues 1049 to 1071 (YDGRWLSGKPHGRGVLKWPDGKM), 1072 to 1094 (YSGMFRNGLEDGYGEYRIPNKAM), 1100 to 1122 (YVGHWKEGKMCGQGVYSYASGEV), 1123 to 1145 (FEGCFQDNMRHGHGLLRSGKLTS), 1151 to 1173 (FIGQWVMDKKAGYGVFDDITRGE), 1175 to 1197 (YMGMWQDDVCQGNGVVVTQFGLY), 1198 to 1220 (YEGNFHLNKMMGNGVLLSEDDTI), and 1221 to 1244 (YEGEFSDDWTLSGKGTLTMPNGDY). A Phosphoserine modification is found at Ser-1335. The 145-residue stretch at 1513 to 1657 (KQPDIALLGF…YYQIQREKLN (145 aa)) folds into the VPS9 domain.

Forms a heteromeric complex with ALS2CL. Interacts with ALS2CL.

Functionally, may act as a GTPase regulator. Controls survival and growth of spinal motoneurons. The polypeptide is Alsin (ALS2) (Homo sapiens (Human)).